Consider the following 233-residue polypeptide: Small ribosomal subunit protein uS3 (233 aa).

The KH type-2 domain occupies 39-107 (IRAFLKRKLY…DVNINIKEER (69 aa)). The segment covering 212 to 222 (MQPEKTEESAP) has biased composition (basic and acidic residues). The segment at 212–233 (MQPEKTEESAPAKKSRRTRRGK) is disordered. A compositionally biased stretch (basic residues) spans 224 to 233 (KKSRRTRRGK).

Belongs to the universal ribosomal protein uS3 family. Part of the 30S ribosomal subunit. Forms a tight complex with proteins S10 and S14.

In terms of biological role, binds the lower part of the 30S subunit head. Binds mRNA in the 70S ribosome, positioning it for translation. This chain is Small ribosomal subunit protein uS3, found in Campylobacter jejuni subsp. doylei (strain ATCC BAA-1458 / RM4099 / 269.97).